A 522-amino-acid polypeptide reads, in one-letter code: GMP synthase [glutamine-hydrolyzing] (522 aa).

One can recognise a Glutamine amidotransferase type-1 domain in the interval 9–204 (KILILDFGAQ…VVDICGCQTL (196 aa)). The active-site Nucleophile is the C86. Active-site residues include H178 and E180. Residues 205-397 (WTSANIIEDQ…LGLPHAMVYR (193 aa)) form the GMPS ATP-PPase domain. Residue 232–238 (SGGVDSS) participates in ATP binding.

As to quaternary structure, homodimer.

The catalysed reaction is XMP + L-glutamine + ATP + H2O = GMP + L-glutamate + AMP + diphosphate + 2 H(+). It participates in purine metabolism; GMP biosynthesis; GMP from XMP (L-Gln route): step 1/1. Its function is as follows. Catalyzes the synthesis of GMP from XMP. The chain is GMP synthase [glutamine-hydrolyzing] from Xylella fastidiosa (strain M23).